Here is a 117-residue protein sequence, read N- to C-terminus: Prefoldin subunit beta (117 aa).

Belongs to the prefoldin subunit beta family. Heterohexamer of two alpha and four beta subunits.

The protein localises to the cytoplasm. In terms of biological role, molecular chaperone capable of stabilizing a range of proteins. Seems to fulfill an ATP-independent, HSP70-like function in archaeal de novo protein folding. The chain is Prefoldin subunit beta (pfdB) from Methanosarcina acetivorans (strain ATCC 35395 / DSM 2834 / JCM 12185 / C2A).